The sequence spans 363 residues: Protein-glutamate methylesterase/protein-glutamine glutaminase 2 (363 aa).

The 118-residue stretch at 6 to 123 (RVLIVDDSAS…AQFLLESKIH (118 aa)) folds into the Response regulatory domain. Asp-57 is subject to 4-aspartylphosphate. The CheB-type methylesterase domain occupies 172–363 (ARTTESVICI…AMEILRAGNR (192 aa)). Active-site residues include Ser-184, His-210, and Asp-306.

Belongs to the CheB family. In terms of processing, phosphorylated by CheA. Phosphorylation of the N-terminal regulatory domain activates the methylesterase activity.

It localises to the cytoplasm. It carries out the reaction [protein]-L-glutamate 5-O-methyl ester + H2O = L-glutamyl-[protein] + methanol + H(+). It catalyses the reaction L-glutaminyl-[protein] + H2O = L-glutamyl-[protein] + NH4(+). Involved in chemotaxis. Part of a chemotaxis signal transduction system that modulates chemotaxis in response to various stimuli. Catalyzes the demethylation of specific methylglutamate residues introduced into the chemoreceptors (methyl-accepting chemotaxis proteins or MCP) by CheR. Also mediates the irreversible deamidation of specific glutamine residues to glutamic acid. The sequence is that of Protein-glutamate methylesterase/protein-glutamine glutaminase 2 from Rhodospirillum rubrum (strain ATCC 11170 / ATH 1.1.1 / DSM 467 / LMG 4362 / NCIMB 8255 / S1).